The chain runs to 277 residues: Energy-coupling factor transporter transmembrane protein EcfT (277 aa).

The next 6 helical transmembrane spans lie at Ile39 to Ile59, Phe61 to Val81, Ile85 to Phe105, Ala121 to Thr141, Val163 to Phe183, and Ser254 to Phe274.

It belongs to the energy-coupling factor EcfT family. In terms of assembly, forms a stable energy-coupling factor (ECF) transporter complex composed of 2 membrane-embedded substrate-binding proteins (S component), 2 ATP-binding proteins (A component) and 2 transmembrane proteins (T component). May be able to interact with more than 1 S component at a time.

Its subcellular location is the cell membrane. Functionally, transmembrane (T) component of an energy-coupling factor (ECF) ABC-transporter complex. Unlike classic ABC transporters this ECF transporter provides the energy necessary to transport a number of different substrates. This chain is Energy-coupling factor transporter transmembrane protein EcfT, found in Lactobacillus helveticus (strain DPC 4571).